The primary structure comprises 919 residues: Bifunctional uridylyltransferase/uridylyl-removing enzyme (919 aa).

Residues 1-373 (MTDPKVPRQR…LAGFNAKSRM (373 aa)) form a uridylyltransferase region. The tract at residues 374–727 (LKGYTVFGGK…CEFDEERGAT (354 aa)) is uridylyl-removing. Positions 489 to 611 (VDEHTIRAIG…VQSLERLRHL (123 aa)) constitute an HD domain. ACT domains lie at 728–811 (LVTV…LAKR) and 839–919 (VIEV…LEPA).

It belongs to the GlnD family. The cofactor is Mg(2+).

The catalysed reaction is [protein-PII]-L-tyrosine + UTP = [protein-PII]-uridylyl-L-tyrosine + diphosphate. The enzyme catalyses [protein-PII]-uridylyl-L-tyrosine + H2O = [protein-PII]-L-tyrosine + UMP + H(+). With respect to regulation, uridylyltransferase (UTase) activity is inhibited by glutamine, while glutamine activates uridylyl-removing (UR) activity. Functionally, modifies, by uridylylation and deuridylylation, the PII regulatory proteins (GlnB and homologs), in response to the nitrogen status of the cell that GlnD senses through the glutamine level. Under low glutamine levels, catalyzes the conversion of the PII proteins and UTP to PII-UMP and PPi, while under higher glutamine levels, GlnD hydrolyzes PII-UMP to PII and UMP (deuridylylation). Thus, controls uridylylation state and activity of the PII proteins, and plays an important role in the regulation of nitrogen assimilation and metabolism. The polypeptide is Bifunctional uridylyltransferase/uridylyl-removing enzyme (Erythrobacter litoralis (strain HTCC2594)).